Here is a 344-residue protein sequence, read N- to C-terminus: MMVIRPVERSDVSALMQLASKTGGGLTSLPANEATLSARIERAIKTWQGELPKSEQGYVFVLEDSETGTVAGICAIEVAVGLNDPWYNYRVGTLVHASKELNVYNALPTLFLSNDHTGSSELCTLFLDPEWRKEGNGYLLSKSRFMFMAAFRDKFNDKVVAEMRGVIDEHGYSPFWQSLGKRFFSMDFSRADFLCGTGQKAFIAELMPKHPIYTHFLSQEAQDVIGQVHPQTAPARAVLEKEGFRYRNYIDIFDGGPTLECDIDRVRAIRKSRLVEVAEGQPAQGDFPACLVANENYHHFRVVLVRTDPATERLILTAAQLDALKCHAGDRVRLVRLCAEEKTA.

Leu-125 is a binding site for succinyl-CoA. His-229 (proton donor) is an active-site residue.

Belongs to the arginine N-succinyltransferase family.

The enzyme catalyses succinyl-CoA + L-arginine = N(2)-succinyl-L-arginine + CoA + H(+). Its pathway is amino-acid degradation; L-arginine degradation via AST pathway; L-glutamate and succinate from L-arginine: step 1/5. Catalyzes the transfer of succinyl-CoA to arginine to produce N(2)-succinylarginine. In Escherichia coli O17:K52:H18 (strain UMN026 / ExPEC), this protein is Arginine N-succinyltransferase.